The primary structure comprises 284 residues: uncharacterized protein (284 aa).

An N-terminal signal peptide occupies residues 1-23; it reads MKRGCAIAVMICGLITSVSAASA.

The protein belongs to the surface antigen msp4 family.

This is an uncharacterized protein from Brucella suis biovar 1 (strain 1330).